Here is a 56-residue protein sequence, read N- to C-terminus: Sperm protamine P1 (56 aa).

A disordered region spans residues 1-56 (RLSRRRVYSIGGRRRRRRRRSRGRRGRRRGRRRGRRRGRRRGRRRRRRRGGRRRRR).

Post-translationally, P2 is phosphorylated in immature sperm. It is dephosphorylated in mature sperm allowing a stronger interaction with DNA. In terms of tissue distribution, testis.

Its subcellular location is the nucleus. It localises to the chromosome. In terms of biological role, protamines substitute for histones in the chromatin of sperm during the haploid phase of spermatogenesis. They compact sperm DNA into a highly condensed, stable and inactive complex. Octopus spermiogenesis is characterized by a double nuclear protein transition: Histones are first replaced by P1, which allows the chromatin to adopt a shape that is not as relaxed as with histones. The majority of P1 is later replaced by P2, forming a compact chromatin. P2 is the main protamine of sperm. The polypeptide is Sperm protamine P1 (Octopus vulgaris (Common octopus)).